The following is a 282-amino-acid chain: Undecaprenyl-diphosphatase (282 aa).

Helical transmembrane passes span 90-110 (YRLGWYVIIGTIPICVMGLLF), 121-141 (LWVVATALVVFSGVIALAEYL), 165-185 (LALVPGVSRSGSTISAGLFLG), 194-214 (FGFLLAIPAVFASGLFSLPDA), 228-248 (QLLVATLIAFVVGLAAVSWFL), and 256-276 (MYWFVGYRVVVGVVVLILLAT).

This sequence belongs to the UppP family.

The protein localises to the cell membrane. It carries out the reaction di-trans,octa-cis-undecaprenyl diphosphate + H2O = di-trans,octa-cis-undecaprenyl phosphate + phosphate + H(+). Catalyzes the dephosphorylation of undecaprenyl diphosphate (UPP). Confers resistance to bacitracin. In Mycobacterium marinum (strain ATCC BAA-535 / M), this protein is Undecaprenyl-diphosphatase.